Here is a 199-residue protein sequence, read N- to C-terminus: dCTP deaminase (199 aa).

DCTP-binding positions include 110-115 (RSSLAR), Asp-128, 136-138 (VLE), Tyr-171, and Gln-182. Glu-138 acts as the Proton donor/acceptor in catalysis.

Belongs to the dCTP deaminase family. Homotrimer.

It catalyses the reaction dCTP + H2O + H(+) = dUTP + NH4(+). It functions in the pathway pyrimidine metabolism; dUMP biosynthesis; dUMP from dCTP (dUTP route): step 1/2. In terms of biological role, catalyzes the deamination of dCTP to dUTP. In Pseudoalteromonas atlantica (strain T6c / ATCC BAA-1087), this protein is dCTP deaminase.